The primary structure comprises 343 residues: Cyclic AMP-AMP-AMP synthase (343 aa).

This sequence belongs to the CD-NTase family. D01 subfamily. The cofactor is Mg(2+).

The catalysed reaction is 3 ATP = 2',3',3'-c-tri-AMP + 3 diphosphate. Functionally, cyclic nucleotide synthase (second messenger synthase) of a CBASS antivirus system. CBASS (cyclic oligonucleotide-based antiphage signaling system) provides immunity against bacteriophage. The CD-NTase protein synthesizes cyclic nucleotides in response to infection; these serve as specific second messenger signals. The signals activate a diverse range of effectors, leading to bacterial cell death and thus abortive phage infection. A type II-C(AAAA) CBASS system. Cyclic trinucleotide synthase that catalyzes the synthesis of 2',3',3'-cyclic AMP-AMP-AMP (2',3',3'-c-tri-AMP or 2'3'3'-cAAA) as the major product, as well as another cyclic AMP(4) 2'-5'-linked minor product that acts as a second messenger for cell signal transduction. This Acinetobacter sp. (strain ATCC 27244 / 9458) protein is Cyclic AMP-AMP-AMP synthase.